The sequence spans 1173 residues: Tectonin beta-propeller repeat-containing protein 1 (1173 aa).

4 TECPR repeats span residues leucine 209–glutamate 240, aspartate 254–glutamate 285, asparagine 301–valine 332, and aspartate 344–valine 376. Residues isoleucine 403–proline 489 form a disordered region. The span at serine 409–glutamate 422 shows a compositional bias: low complexity. Polar residues predominate over residues serine 424 to serine 434. Positions valine 609–tyrosine 718 constitute a PH domain. TECPR repeat units lie at residues glutamine 730–arginine 757, isoleucine 952–glycine 983, leucine 997–proline 1028, threonine 1043–serine 1074, and aspartate 1086–isoleucine 1126. Residues glutamine 1147–cysteine 1173 are disordered.

The protein belongs to the TECPR1 family.

The protein resides in the cytoplasmic vesicle. Its subcellular location is the autophagosome membrane. It is found in the lysosome membrane. Its function is as follows. Tethering factor involved in autophagy. Involved in autophagosome maturation by promoting the autophagosome fusion with lysosomes. Binds phosphatidylinositol-3-phosphate (PtdIns(3)P) present at the surface of autophagosomes. The sequence is that of Tectonin beta-propeller repeat-containing protein 1 (tecpr1) from Xenopus tropicalis (Western clawed frog).